The sequence spans 81 residues: Large ribosomal subunit protein bL31B (81 aa).

Belongs to the bacterial ribosomal protein bL31 family. Type B subfamily. In terms of assembly, part of the 50S ribosomal subunit.

The chain is Large ribosomal subunit protein bL31B from Oceanobacillus iheyensis (strain DSM 14371 / CIP 107618 / JCM 11309 / KCTC 3954 / HTE831).